The primary structure comprises 193 residues: Probable nicotinate-nucleotide adenylyltransferase (193 aa).

Belongs to the NadD family.

The enzyme catalyses nicotinate beta-D-ribonucleotide + ATP + H(+) = deamido-NAD(+) + diphosphate. Its pathway is cofactor biosynthesis; NAD(+) biosynthesis; deamido-NAD(+) from nicotinate D-ribonucleotide: step 1/1. In terms of biological role, catalyzes the reversible adenylation of nicotinate mononucleotide (NaMN) to nicotinic acid adenine dinucleotide (NaAD). In Flavobacterium psychrophilum (strain ATCC 49511 / DSM 21280 / CIP 103535 / JIP02/86), this protein is Probable nicotinate-nucleotide adenylyltransferase.